Consider the following 249-residue polypeptide: Type III pantothenate kinase (249 aa).

6–13 (DCGNSFIK) serves as a coordination point for ATP. Substrate contacts are provided by residues tyrosine 93 and 100–103 (GMDR). The active-site Proton acceptor is the aspartate 102. Aspartate 122 contacts K(+). Position 125 (threonine 125) interacts with ATP. Residue threonine 181 coordinates substrate.

It belongs to the type III pantothenate kinase family. As to quaternary structure, homodimer. Requires NH4(+) as cofactor. It depends on K(+) as a cofactor.

The protein localises to the cytoplasm. The enzyme catalyses (R)-pantothenate + ATP = (R)-4'-phosphopantothenate + ADP + H(+). It participates in cofactor biosynthesis; coenzyme A biosynthesis; CoA from (R)-pantothenate: step 1/5. Functionally, catalyzes the phosphorylation of pantothenate (Pan), the first step in CoA biosynthesis. In Pseudomonas putida (strain ATCC 700007 / DSM 6899 / JCM 31910 / BCRC 17059 / LMG 24140 / F1), this protein is Type III pantothenate kinase.